Here is a 380-residue protein sequence, read N- to C-terminus: Queuine tRNA-ribosyltransferase (380 aa).

Aspartate 96 serves as the catalytic Proton acceptor. Substrate contacts are provided by residues 96 to 100 (DSGGF), aspartate 150, glutamine 193, and glycine 220. The segment at 251-257 (GVGAPDS) is RNA binding. Aspartate 270 functions as the Nucleophile in the catalytic mechanism. Positions 275–279 (TRIAR) are RNA binding; important for wobble base 34 recognition. The Zn(2+) site is built by cysteine 308, cysteine 310, cysteine 313, and histidine 339.

This sequence belongs to the queuine tRNA-ribosyltransferase family. Homodimer. Within each dimer, one monomer is responsible for RNA recognition and catalysis, while the other monomer binds to the replacement base PreQ1. It depends on Zn(2+) as a cofactor.

The catalysed reaction is 7-aminomethyl-7-carbaguanine + guanosine(34) in tRNA = 7-aminomethyl-7-carbaguanosine(34) in tRNA + guanine. It functions in the pathway tRNA modification; tRNA-queuosine biosynthesis. Its function is as follows. Catalyzes the base-exchange of a guanine (G) residue with the queuine precursor 7-aminomethyl-7-deazaguanine (PreQ1) at position 34 (anticodon wobble position) in tRNAs with GU(N) anticodons (tRNA-Asp, -Asn, -His and -Tyr). Catalysis occurs through a double-displacement mechanism. The nucleophile active site attacks the C1' of nucleotide 34 to detach the guanine base from the RNA, forming a covalent enzyme-RNA intermediate. The proton acceptor active site deprotonates the incoming PreQ1, allowing a nucleophilic attack on the C1' of the ribose to form the product. After dissociation, two additional enzymatic reactions on the tRNA convert PreQ1 to queuine (Q), resulting in the hypermodified nucleoside queuosine (7-(((4,5-cis-dihydroxy-2-cyclopenten-1-yl)amino)methyl)-7-deazaguanosine). This chain is Queuine tRNA-ribosyltransferase, found in Streptococcus pyogenes serotype M49 (strain NZ131).